Here is a 424-residue protein sequence, read N- to C-terminus: Serine--tRNA ligase (424 aa).

L-serine is bound at residue 233–235; that stretch reads TAE. 264–266 serves as a coordination point for ATP; the sequence is RRE. Position 287 (Glu287) interacts with L-serine. 351–354 contributes to the ATP binding site; that stretch reads EISS. An L-serine-binding site is contributed by Ser386.

The protein belongs to the class-II aminoacyl-tRNA synthetase family. Type-1 seryl-tRNA synthetase subfamily. In terms of assembly, homodimer. The tRNA molecule binds across the dimer.

It localises to the cytoplasm. The enzyme catalyses tRNA(Ser) + L-serine + ATP = L-seryl-tRNA(Ser) + AMP + diphosphate + H(+). It carries out the reaction tRNA(Sec) + L-serine + ATP = L-seryl-tRNA(Sec) + AMP + diphosphate + H(+). Its pathway is aminoacyl-tRNA biosynthesis; selenocysteinyl-tRNA(Sec) biosynthesis; L-seryl-tRNA(Sec) from L-serine and tRNA(Sec): step 1/1. Its function is as follows. Catalyzes the attachment of serine to tRNA(Ser). Is also able to aminoacylate tRNA(Sec) with serine, to form the misacylated tRNA L-seryl-tRNA(Sec), which will be further converted into selenocysteinyl-tRNA(Sec). The sequence is that of Serine--tRNA ligase from Pseudothermotoga lettingae (strain ATCC BAA-301 / DSM 14385 / NBRC 107922 / TMO) (Thermotoga lettingae).